Reading from the N-terminus, the 198-residue chain is V-type ATP synthase subunit E (198 aa).

It belongs to the V-ATPase E subunit family.

Produces ATP from ADP in the presence of a proton gradient across the membrane. The polypeptide is V-type ATP synthase subunit E (Clostridium perfringens (strain ATCC 13124 / DSM 756 / JCM 1290 / NCIMB 6125 / NCTC 8237 / Type A)).